Consider the following 88-residue polypeptide: Small ribosomal subunit protein uS15 (88 aa).

Belongs to the universal ribosomal protein uS15 family. In terms of assembly, part of the 30S ribosomal subunit. Forms a bridge to the 50S subunit in the 70S ribosome, contacting the 23S rRNA.

Functionally, one of the primary rRNA binding proteins, it binds directly to 16S rRNA where it helps nucleate assembly of the platform of the 30S subunit by binding and bridging several RNA helices of the 16S rRNA. Its function is as follows. Forms an intersubunit bridge (bridge B4) with the 23S rRNA of the 50S subunit in the ribosome. This chain is Small ribosomal subunit protein uS15, found in Francisella tularensis subsp. novicida (strain U112).